We begin with the raw amino-acid sequence, 351 residues long: MSSDEQKPEVNGYWTSVKNFSSSAATSINNATTSAWNSEFAASTSATVKDFSTSATKSIGEAATSAWNSETASTATSAISEAAKNARSWYDSSSEENEELEPSGHGFRGGIAALSRNASHYVISTVGRSSNILNIFDKTNKSSLGNPRWWIRFDRPHGNVDFHHININKAVTGLKDPHIPLTPTTAKTIGVLGKVAEKANDVAPLLTTAAMIYEAYRVGQEVHKDMNHGTTRNTIKTLAATSGTYSSGSIGAYAGSVIGTSIFPGLGTIFGAVVGGIVGGHFGGHYSHVATENALNHVKWDVVTFVCDGCDEEYTWKKYQEIEGTCCTRFNNKRQDSVDYWFKKLETNHDF.

This is an uncharacterized protein from Caenorhabditis elegans.